Here is a 460-residue protein sequence, read N- to C-terminus: Ribulose bisphosphate carboxylase (460 aa).

Asn-112 is a substrate binding site. Lys-167 serves as the catalytic Proton acceptor. Residue Lys-169 coordinates substrate. Mg(2+) is bound by residues Lys-192, Asp-194, and Glu-195. The residue at position 192 (Lys-192) is an N6-carboxylysine. Residue His-288 is the Proton acceptor of the active site. Residues Arg-289, His-322, and Ser-369 each contribute to the substrate site.

It belongs to the RuBisCO large chain family. Type II subfamily. As to quaternary structure, homodimer. Mg(2+) is required as a cofactor.

The catalysed reaction is 2 (2R)-3-phosphoglycerate + 2 H(+) = D-ribulose 1,5-bisphosphate + CO2 + H2O. The enzyme catalyses D-ribulose 1,5-bisphosphate + O2 = 2-phosphoglycolate + (2R)-3-phosphoglycerate + 2 H(+). Functionally, ruBisCO catalyzes two reactions: the carboxylation of D-ribulose 1,5-bisphosphate, the primary event in carbon dioxide fixation, as well as the oxidative fragmentation of the pentose substrate. Both reactions occur simultaneously and in competition at the same active site. This Rhodopseudomonas palustris (strain BisA53) protein is Ribulose bisphosphate carboxylase.